A 210-amino-acid chain; its full sequence is DNA-directed RNA polymerase III subunit rpc31 (210 aa).

Ser-103 bears the Phosphoserine mark. A disordered region spans residues 151 to 210 (KDESSEAAHPNIEEEPDEGLEEEDEDFGDDDDNDYGENYFDNGEGDDYDDYDGDEGAIYE). Composition is skewed to acidic residues over residues 163–185 (EEEPDEGLEEEDEDFGDDDDNDY) and 193–210 (GEGDDYDDYDGDEGAIYE).

Belongs to the eukaryotic RPC7 RNA polymerase subunit family. Component of the RNA polymerase III (Pol III) complex.

It is found in the cytoplasm. Its subcellular location is the nucleus. Its function is as follows. DNA-dependent RNA polymerase catalyzes the transcription of DNA into RNA using the four ribonucleoside triphosphates as substrates. Specific peripheric component of RNA polymerase III which synthesizes small RNAs, such as 5S rRNA and tRNAs. This Schizosaccharomyces pombe (strain 972 / ATCC 24843) (Fission yeast) protein is DNA-directed RNA polymerase III subunit rpc31 (rpc31).